The sequence spans 680 residues: DNA-directed RNA polymerase subunit beta' (680 aa).

Residues C69, C71, C87, and C90 each contribute to the Zn(2+) site. 3 residues coordinate Mg(2+): D489, D491, and D493.

Belongs to the RNA polymerase beta' chain family. RpoC1 subfamily. In terms of assembly, in plastids the minimal PEP RNA polymerase catalytic core is composed of four subunits: alpha, beta, beta', and beta''. When a (nuclear-encoded) sigma factor is associated with the core the holoenzyme is formed, which can initiate transcription. Mg(2+) is required as a cofactor. The cofactor is Zn(2+).

It localises to the plastid. The protein resides in the chloroplast. It carries out the reaction RNA(n) + a ribonucleoside 5'-triphosphate = RNA(n+1) + diphosphate. Its function is as follows. DNA-dependent RNA polymerase catalyzes the transcription of DNA into RNA using the four ribonucleoside triphosphates as substrates. This is DNA-directed RNA polymerase subunit beta' from Draba nemorosa (Woodland whitlowgrass).